A 508-amino-acid chain; its full sequence is ATP synthase subunit alpha, chloroplastic (508 aa).

Position 172 to 179 (172 to 179 (GDRQTGKT)) interacts with ATP.

This sequence belongs to the ATPase alpha/beta chains family. In terms of assembly, F-type ATPases have 2 components, CF(1) - the catalytic core - and CF(0) - the membrane proton channel. CF(1) has five subunits: alpha(3), beta(3), gamma(1), delta(1), epsilon(1). CF(0) has four main subunits: a, b, b' and c.

It localises to the plastid. The protein localises to the chloroplast thylakoid membrane. It carries out the reaction ATP + H2O + 4 H(+)(in) = ADP + phosphate + 5 H(+)(out). Functionally, produces ATP from ADP in the presence of a proton gradient across the membrane. The alpha chain is a regulatory subunit. The sequence is that of ATP synthase subunit alpha, chloroplastic from Psilotum nudum (Whisk fern).